Reading from the N-terminus, the 760-residue chain is General transcription and DNA repair factor IIH helicase subunit XPD (760 aa).

In terms of domain architecture, Helicase ATP-binding spans 7–283 (GLLVYFPYDY…KETDEQRLRD (277 aa)). Residue 42-49 (MPSGTGKT) participates in ATP binding. The [4Fe-4S] cluster site is built by C116, C134, C155, and C190. Residues 234–237 (DEAH) carry the DEAH box motif. The interval 438 to 637 (MDASLAIKPV…TQSRILKARL (200 aa)) is mediates interaction with MMS19. The short motif at 682–695 (KRFARADKRGKLPR) is the Nuclear localization signal element.

This sequence belongs to the helicase family. RAD3/XPD subfamily. Component of the 7-subunit TFIIH core complex composed of XPB/ERCC3, XPD/ERCC2, GTF2H1, GTF2H2, GTF2H3, GTF2H4 and GTF2H5, which is active in NER. The core complex associates with the 3-subunit CDK-activating kinase (CAK) module composed of CCNH/cyclin H, CDK7 and MNAT1 to form the 10-subunit holoenzyme (holo-TFIIH) active in transcription. The interaction with GTF2H2 results in the stimulation of the 5'--&gt;3' helicase activity. Component of the MMXD complex, which includes CIAO1, ERCC2, CIAO2B, MMS19 and SLC25A5. Interacts with CIAO1 and CIAO2B; the interaction WITH CIAO2B is direct. Interacts with ATF7IP. Interacts directly with MMS19. Part of TBP-based Pol II pre-initiation complex (PIC), in which Pol II core assembles with general transcription factors and other specific initiation factors including GTF2E1, GTF2E2, GTF2F1, GTF2F2, TCEA1, ERCC2, ERCC3, GTF2H2, GTF2H3, GTF2H4, GTF2H5, GTF2A1, GTF2A2, GTF2B and TBP; this large multi-subunit PIC complex mediates DNA unwinding and targets Pol II core to the transcription start site where the first phosphodiester bond forms. Mg(2+) serves as cofactor. The cofactor is [4Fe-4S] cluster. ISGylated.

The protein resides in the nucleus. It localises to the cytoplasm. Its subcellular location is the cytoskeleton. It is found in the spindle. It catalyses the reaction Couples ATP hydrolysis with the unwinding of duplex DNA at the replication fork by translocating in the 5'-3' direction. This creates two antiparallel DNA single strands (ssDNA). The leading ssDNA polymer is the template for DNA polymerase III holoenzyme which synthesizes a continuous strand.. The enzyme catalyses ATP + H2O = ADP + phosphate + H(+). Its function is as follows. ATP-dependent 5'-3' DNA helicase. Component of the general transcription and DNA repair factor IIH (TFIIH) core complex which is involved in general and transcription-coupled nucleotide excision repair (NER) of damaged DNA. When complexed to CDK-activating kinase (CAK), involved in transcription by RNA polymerase II. In NER, TFIIH acts by opening DNA around the lesion to allow the excision of the damaged oligonucleotide and its replacement by a new DNA fragment. The ATP-dependent helicase activity of XPD/ERCC2 is required for DNA opening. In transcription, TFIIH has an essential role in transcription initiation. When the pre-initiation complex (PIC) has been established, TFIIH is required for promoter opening and promoter escape. Phosphorylation of the C-terminal tail (CTD) of the largest subunit of RNA polymerase II by the kinase module CAK controls the initiation of transcription. XPD/ERCC2 acts by forming a bridge between CAK and the core-TFIIH complex. Involved in the regulation of vitamin-D receptor activity. As part of the mitotic spindle-associated MMXD complex it plays a role in chromosome segregation. Might have a role in aging process and could play a causative role in the generation of skin cancers. This Cricetulus griseus (Chinese hamster) protein is General transcription and DNA repair factor IIH helicase subunit XPD.